Consider the following 556-residue polypeptide: Formate--tetrahydrofolate ligase (556 aa).

Position 65-72 (65-72) interacts with ATP; it reads TPAGEGKS.

This sequence belongs to the formate--tetrahydrofolate ligase family.

The catalysed reaction is (6S)-5,6,7,8-tetrahydrofolate + formate + ATP = (6R)-10-formyltetrahydrofolate + ADP + phosphate. Its pathway is one-carbon metabolism; tetrahydrofolate interconversion. The sequence is that of Formate--tetrahydrofolate ligase from Streptococcus mutans serotype c (strain ATCC 700610 / UA159).